Reading from the N-terminus, the 863-residue chain is Leucine--tRNA ligase (863 aa).

Positions 42-52 match the 'HIGH' region motif; the sequence is PYPSGRLHMGH. Residues 622–626 carry the 'KMSKS' region motif; that stretch reads KMSKS. Lys625 is an ATP binding site.

The protein belongs to the class-I aminoacyl-tRNA synthetase family.

The protein localises to the cytoplasm. The catalysed reaction is tRNA(Leu) + L-leucine + ATP = L-leucyl-tRNA(Leu) + AMP + diphosphate. This chain is Leucine--tRNA ligase, found in Shewanella loihica (strain ATCC BAA-1088 / PV-4).